Consider the following 516-residue polypeptide: Oxysterol-binding protein-like protein 1 (516 aa).

2 disordered regions span residues 168-240 (PLGK…SQKS) and 459-501 (KQEI…EEGK). Residues 178-187 (SRTTSSQSVA) show a composition bias toward polar residues. Phosphoserine is present on Ser-182. Basic residues predominate over residues 197-206 (TSKKKSSKKN). Residues 218-238 (DRSSTAPSTAESNNEHLSSSQ) show a composition bias toward polar residues.

The protein belongs to the OSBP family.

Its subcellular location is the endoplasmic reticulum. The polypeptide is Oxysterol-binding protein-like protein 1 (obp1) (Schizosaccharomyces pombe (strain 972 / ATCC 24843) (Fission yeast)).